The primary structure comprises 890 residues: Translation initiation factor IF-2 (890 aa).

The interval 45–304 (LIDHLNQKNS…LQQGFQKPAQ (260 aa)) is disordered. Residues 67-81 (STLNIPGTGGKSKSV) are compositionally biased toward polar residues. Residues 92–217 (VKRDPQEAER…RMAEENKWTD (126 aa)) are compositionally biased toward basic and acidic residues. Residues 252–266 (GRGRNAKAARPKKGN) are compositionally biased toward basic residues. A compositionally biased stretch (basic and acidic residues) spans 267-280 (KHSESKADREEARA). In terms of domain architecture, tr-type G spans 389–558 (PRAPVVTIMG…LLQAEVLELK (170 aa)). The G1 stretch occupies residues 398-405 (GHVDHGKT). GTP is bound at residue 398 to 405 (GHVDHGKT). Residues 423–427 (GITQH) are G2. Positions 444–447 (DTPG) are G3. Residues 444-448 (DTPGH) and 498-501 (NKID) contribute to the GTP site. Residues 498-501 (NKID) form a G4 region. A G5 region spans residues 534 to 536 (SAK). The residue at position 808 (lysine 808) is an N6-acetyllysine.

Belongs to the TRAFAC class translation factor GTPase superfamily. Classic translation factor GTPase family. IF-2 subfamily.

The protein localises to the cytoplasm. One of the essential components for the initiation of protein synthesis. Protects formylmethionyl-tRNA from spontaneous hydrolysis and promotes its binding to the 30S ribosomal subunits. Also involved in the hydrolysis of GTP during the formation of the 70S ribosomal complex. The polypeptide is Translation initiation factor IF-2 (Escherichia fergusonii (strain ATCC 35469 / DSM 13698 / CCUG 18766 / IAM 14443 / JCM 21226 / LMG 7866 / NBRC 102419 / NCTC 12128 / CDC 0568-73)).